Reading from the N-terminus, the 975-residue chain is Glycine dehydrogenase (decarboxylating) (975 aa).

Lys723 is modified (N6-(pyridoxal phosphate)lysine).

This sequence belongs to the GcvP family. The glycine cleavage system is composed of four proteins: P, T, L and H. Pyridoxal 5'-phosphate is required as a cofactor.

It catalyses the reaction N(6)-[(R)-lipoyl]-L-lysyl-[glycine-cleavage complex H protein] + glycine + H(+) = N(6)-[(R)-S(8)-aminomethyldihydrolipoyl]-L-lysyl-[glycine-cleavage complex H protein] + CO2. The glycine cleavage system catalyzes the degradation of glycine. The P protein binds the alpha-amino group of glycine through its pyridoxal phosphate cofactor; CO(2) is released and the remaining methylamine moiety is then transferred to the lipoamide cofactor of the H protein. This Burkholderia cenocepacia (strain HI2424) protein is Glycine dehydrogenase (decarboxylating).